The following is a 321-amino-acid chain: Torsin-2A (321 aa).

An N-terminal signal peptide occupies residues 1–26 (MAVARHGYRPWGSILGLLGLALAAAA). 93–100 (GWTGTGKS) is an ATP binding site. N149 carries an N-linked (GlcNAc...) asparagine glycan.

Belongs to the ClpA/ClpB family. Torsin subfamily. As to quaternary structure, homohexamer. Interacts with TOR1AIP1. Post-translationally, N-glycosylated. Expressed at similar levels in liver, muscle and brain (at protein level).

The protein localises to the endoplasmic reticulum lumen. In Mus musculus (Mouse), this protein is Torsin-2A (Tor2a).